The primary structure comprises 127 residues: Fluoride-specific ion channel FluC (127 aa).

4 helical membrane-spanning segments follow: residues 4–24 (LDYL…YLVS), 39–59 (GTII…FAAI), 68–88 (AILF…TFTY), and 102–122 (VAYA…GMIL). Residues G78 and T81 each contribute to the Na(+) site.

It belongs to the fluoride channel Fluc/FEX (TC 1.A.43) family.

It is found in the cell inner membrane. It carries out the reaction fluoride(in) = fluoride(out). Its activity is regulated as follows. Na(+) is not transported, but it plays an essential structural role and its presence is essential for fluoride channel function. In terms of biological role, fluoride-specific ion channel. Important for reducing fluoride concentration in the cell, thus reducing its toxicity. In Thermotoga maritima (strain ATCC 43589 / DSM 3109 / JCM 10099 / NBRC 100826 / MSB8), this protein is Fluoride-specific ion channel FluC.